We begin with the raw amino-acid sequence, 247 residues long: Adenosylcobinamide-GDP ribazoletransferase (247 aa).

A run of 5 helical transmembrane segments spans residues 34 to 54 (IITF…VFMV), 57 to 77 (AWCG…LMTG), 113 to 133 (GGLA…ELAL), 138 to 158 (ILAS…LLMY), and 194 to 214 (VLLL…AIFI).

It belongs to the CobS family. The cofactor is Mg(2+).

The protein localises to the cell inner membrane. The enzyme catalyses alpha-ribazole + adenosylcob(III)inamide-GDP = adenosylcob(III)alamin + GMP + H(+). It carries out the reaction alpha-ribazole 5'-phosphate + adenosylcob(III)inamide-GDP = adenosylcob(III)alamin 5'-phosphate + GMP + H(+). The protein operates within cofactor biosynthesis; adenosylcobalamin biosynthesis; adenosylcobalamin from cob(II)yrinate a,c-diamide: step 7/7. In terms of biological role, joins adenosylcobinamide-GDP and alpha-ribazole to generate adenosylcobalamin (Ado-cobalamin). Also synthesizes adenosylcobalamin 5'-phosphate from adenosylcobinamide-GDP and alpha-ribazole 5'-phosphate. The polypeptide is Adenosylcobinamide-GDP ribazoletransferase (Shigella flexneri serotype 5b (strain 8401)).